Consider the following 481-residue polypeptide: ATP synthase subunit beta, chloroplastic (481 aa).

Residue 161-168 (GGAGVGKT) coordinates ATP.

Belongs to the ATPase alpha/beta chains family. F-type ATPases have 2 components, CF(1) - the catalytic core - and CF(0) - the membrane proton channel. CF(1) has five subunits: alpha(3), beta(3), gamma(1), delta(1), epsilon(1). CF(0) has four main subunits: a(1), b(1), b'(1) and c(9-12).

It is found in the plastid. The protein localises to the chloroplast thylakoid membrane. The enzyme catalyses ATP + H2O + 4 H(+)(in) = ADP + phosphate + 5 H(+)(out). Produces ATP from ADP in the presence of a proton gradient across the membrane. The catalytic sites are hosted primarily by the beta subunits. The protein is ATP synthase subunit beta, chloroplastic of Pylaiella littoralis (Seaweed).